Consider the following 363-residue polypeptide: 3-isopropylmalate dehydrogenase (363 aa).

Residue 78-89 (GPKWGTGAVRPE) coordinates NAD(+). Positions 96, 106, 135, and 224 each coordinate substrate. Residues D224, D249, and D253 each coordinate Mg(2+). 288-299 (GSAPDLPANKVN) lines the NAD(+) pocket.

The protein belongs to the isocitrate and isopropylmalate dehydrogenases family. In terms of assembly, homodimer. Mg(2+) is required as a cofactor. Requires Mn(2+) as cofactor.

It is found in the cytoplasm. The enzyme catalyses (2R,3S)-3-isopropylmalate + NAD(+) = 4-methyl-2-oxopentanoate + CO2 + NADH. The protein operates within amino-acid biosynthesis; L-leucine biosynthesis; L-leucine from 3-methyl-2-oxobutanoate: step 3/4. In terms of biological role, catalyzes the oxidation of 3-carboxy-2-hydroxy-4-methylpentanoate (3-isopropylmalate) to 3-carboxy-4-methyl-2-oxopentanoate. The product decarboxylates to 4-methyl-2 oxopentanoate. The protein is 3-isopropylmalate dehydrogenase (LEU2) of Cyberlindnera jadinii (Torula yeast).